A 407-amino-acid chain; its full sequence is Betaine--homocysteine S-methyltransferase 1 (407 aa).

Positions 11 to 314 (KGILERLNSG…YHIRAIAEEL (304 aa)) constitute a Hcy-binding domain. N6-succinyllysine is present on residues Lys40, Lys93, and Lys98. A Zn(2+)-binding site is contributed by Cys217. Lys232 and Lys241 each carry N6-succinyllysine. Residues Cys299 and Cys300 each contribute to the Zn(2+) site. Phosphoserine is present on Ser330. 2 positions are modified to N6-succinyllysine: Lys340 and Lys377.

In terms of assembly, homotetramer. Requires Zn(2+) as cofactor.

The protein resides in the cytoplasm. The protein localises to the cytosol. It localises to the nucleus. It carries out the reaction L-homocysteine + glycine betaine = N,N-dimethylglycine + L-methionine. It functions in the pathway amine and polyamine degradation; betaine degradation; sarcosine from betaine: step 1/2. Its pathway is amino-acid biosynthesis; L-methionine biosynthesis via de novo pathway; L-methionine from L-homocysteine (BhmT route): step 1/1. Its function is as follows. Involved in the regulation of homocysteine metabolism. Converts betaine and homocysteine to dimethylglycine and methionine, respectively. This reaction is also required for the irreversible oxidation of choline. This chain is Betaine--homocysteine S-methyltransferase 1 (BHMT), found in Bos taurus (Bovine).